Here is an 89-residue protein sequence, read N- to C-terminus: MSITAERKTALIAEHARTEGDTGSAEVQVAILSERIANLTEHFKTHKKDNHSRRGLLMMVSQRRSLLDHLKKSDLGRYSALIEKLGLRR.

It belongs to the universal ribosomal protein uS15 family. As to quaternary structure, part of the 30S ribosomal subunit. Forms a bridge to the 50S subunit in the 70S ribosome, contacting the 23S rRNA.

Functionally, one of the primary rRNA binding proteins, it binds directly to 16S rRNA where it helps nucleate assembly of the platform of the 30S subunit by binding and bridging several RNA helices of the 16S rRNA. In terms of biological role, forms an intersubunit bridge (bridge B4) with the 23S rRNA of the 50S subunit in the ribosome. The polypeptide is Small ribosomal subunit protein uS15 (Caulobacter sp. (strain K31)).